A 1102-amino-acid chain; its full sequence is Phosphatidylinositol 4,5-bisphosphate 3-kinase catalytic subunit gamma isoform (1102 aa).

In terms of domain architecture, PI3K-ABD spans 34 to 141; that stretch reads SMELIPIEFV…PGQIHVVQRH (108 aa). Residues 217-309 enclose the PI3K-RBD domain; sequence NNCVFIVIHR…GEEIHLVLDT (93 aa). The C2 PI3K-type domain maps to 357 to 521; that stretch reads CDRKFRVKIR…NSMSISILLD (165 aa). The region spanning 541-723 is the PIK helical domain; it reads DRVRAEMPNQ…AVILEAYLRG (183 aa). The region spanning 797–1080 is the PI3K/PI4K catalytic domain; it reads VIEKCKVMAS…QIEVCRDKGW (284 aa). Positions 803–809 are G-loop; the sequence is VMASKKK. Residues 829 to 838 and 864 to 872 contribute to the ATP site; these read GIIFKHGDDL and LLPYGCIST. The tract at residues 943-951 is catalytic loop; that stretch reads GIGDRHNDN. Position 961–969 (961–969) interacts with ATP; that stretch reads FHIDFGHIL. The tract at residues 962–988 is activation loop; it reads HIDFGHILGNYKSFLGINKERVPFVLT. Position 1024 is a phosphothreonine; by PKA (threonine 1024). A Phosphoserine; by autocatalysis modification is found at serine 1101.

It belongs to the PI3/PI4-kinase family. As to quaternary structure, heterodimer of a catalytic subunit PIK3CG and a PIK3R5 or PIK3R6 regulatory subunit. Interacts with GRK2 through the PIK helical domain. Interaction with GRK2 is required for targeting to agonist-occupied receptor. Interacts with PDE3B; regulates PDE3B activity and thereby cAMP levels in cells. Interacts with TPM2. Interacts with EPHA8; regulates integrin-mediated cell adhesion to substrate. Interacts with HRAS; the interaction is required for membrane recruitment and beta-gamma G protein dimer-dependent activation of the PI3K gamma complex PIK3CG:PIK3R6. In terms of processing, autophosphorylation at Ser-1101 has no effect on the phosphatidylinositol-4,5-bisphosphate 3-kinase activity.

The protein localises to the cytoplasm. The protein resides in the cell membrane. The catalysed reaction is a 1,2-diacyl-sn-glycero-3-phospho-(1D-myo-inositol-4,5-bisphosphate) + ATP = a 1,2-diacyl-sn-glycero-3-phospho-(1D-myo-inositol-3,4,5-trisphosphate) + ADP + H(+). It catalyses the reaction a 1,2-diacyl-sn-glycero-3-phospho-(1D-myo-inositol) + ATP = a 1,2-diacyl-sn-glycero-3-phospho-(1D-myo-inositol-3-phosphate) + ADP + H(+). It carries out the reaction a 1,2-diacyl-sn-glycero-3-phospho-(1D-myo-inositol 4-phosphate) + ATP = a 1,2-diacyl-sn-glycero-3-phospho-(1D-myo-inositol-3,4-bisphosphate) + ADP + H(+). The enzyme catalyses L-seryl-[protein] + ATP = O-phospho-L-seryl-[protein] + ADP + H(+). It participates in phospholipid metabolism; phosphatidylinositol phosphate biosynthesis. Its activity is regulated as follows. Activated by both the alpha and the beta-gamma G proteins following stimulation of G protein-coupled receptors (GPCRs). Activation by GPCRs is assisted by the regulatory subunits (PIK3R5 or PIK3R6) leading to the translocation from the cytosol to the plasma membrane and to kinase activation. When bound to PIK3R5 the PI3K activity of PIK3CG could be activated greater than 100-fold by the beta-gamma G proteins. In terms of biological role, phosphoinositide-3-kinase (PI3K) that phosphorylates PtdIns(4,5)P2 (Phosphatidylinositol 4,5-bisphosphate) to generate phosphatidylinositol 3,4,5-trisphosphate (PIP3). PIP3 plays a key role by recruiting PH domain-containing proteins to the membrane, including AKT1 and PDPK1, activating signaling cascades involved in cell growth, survival, proliferation, motility and morphology. Links G-protein coupled receptor activation to PIP3 production. Involved in immune, inflammatory and allergic responses. Modulates leukocyte chemotaxis to inflammatory sites and in response to chemoattractant agents. May control leukocyte polarization and migration by regulating the spatial accumulation of PIP3 and by regulating the organization of F-actin formation and integrin-based adhesion at the leading edge. Controls motility of dendritic cells. Participates in T-lymphocyte migration. Regulates T-lymphocyte proliferation and cytokine production. Required for B-lymphocyte development and signaling. Together with other PI3Ks are involved in the oxidative burst produced by neutrophils in response to chemotactic agents. Together with PIK3CD regulate neutrophil extravasation. Together with PIK3CB promotes platelet aggregation and thrombosis. Regulates alpha-IIb/beta-3 integrins (ITGA2B/ ITGB3) adhesive function in platelets downstream of P2Y12 through a lipid kinase activity-independent mechanism. May have also a lipid kinase activity-dependent function in platelet aggregation. Involved in endothelial progenitor cell migration. Negative regulator of cardiac contractility. Modulates cardiac contractility by anchoring protein kinase A (PKA) and PDE3B activation, reducing cAMP levels. Regulates cardiac contractility also by promoting beta-adrenergic receptor internalization by binding to GRK2 and by non-muscle tropomyosin phosphorylation. Also has serine/threonine protein kinase activity: both lipid and protein kinase activities are required for beta-adrenergic receptor endocytosis. May also have a scaffolding role in modulating cardiac contractility. Contribute to cardiac hypertrophy under pathological stress. Through simultaneous binding of PDE3B to RAPGEF3 and PIK3R6 is assembled in a signaling complex in which the PI3K gamma complex is activated by RAPGEF3 and which is involved in angiogenesis. In neutrophils, participates in a phospholipase C-activating N-formyl peptide-activated GPCR (G protein-coupled receptor) signaling pathway downstream of RASGRP4-mediated Ras-activation, to promote neutrophil functional responses. The sequence is that of Phosphatidylinositol 4,5-bisphosphate 3-kinase catalytic subunit gamma isoform (PIK3CG) from Sus scrofa (Pig).